A 220-amino-acid chain; its full sequence is Protein myomaker (220 aa).

Position 1 (methionine 1) is a topological domain, extracellular. A helical membrane pass occupies residues 2-22 (GAFIAKMLLPTISSLVFVPAA). At 23–37 (SVAAKRGFHMEAMVY) the chain is on the cytoplasmic side. A helical transmembrane segment spans residues 38-58 (FFTMFFTAIYHACDGPGLSIL). Topologically, residues 59-64 (CFMKYD) are extracellular. Residues 65–85 (ILEYFSVYGTAISMWVTLLAL) form a helical membrane-spanning segment. Topologically, residues 86–93 (GDFDEPKR) are cytoplasmic. The helical transmembrane segment at 94–110 (SSLTMFGVLTAAVRIYQ) threads the bilayer. Topologically, residues 111–112 (DR) are extracellular. A helical membrane pass occupies residues 113-133 (LGYGIYSGPIGTAVFMITVKW). At 134–153 (LQKMKEKKGLYPDKSVYTQQ) the chain is on the cytoplasmic side. Residues 154-174 (VGPGCCFGALALMLRFYFEEW) form a helical membrane-spanning segment. A topological domain (extracellular) is located at residue aspartate 175. The helical transmembrane segment at 176–196 (YAYVHSFYHVSLAMSFILLLP) threads the bilayer. At 197–220 (KKNRYAGTGRNAAKLNCYTLCCCV) the chain is on the cytoplasmic side.

Belongs to the TMEM8 family.

The protein resides in the cell membrane. In terms of biological role, myoblast-specific protein that mediates myoblast fusion, an essential step for the formation of multi-nucleated muscle fibers. Actively participates in the membrane fusion reaction by mediating the mixing of cell membrane lipids (hemifusion) upstream of mymx. The polypeptide is Protein myomaker (Danio rerio (Zebrafish)).